Consider the following 179-residue polypeptide: ADP-ribosylation factor (179 aa).

A lipid anchor (N-myristoyl glycine) is attached at Gly-2. GTP is bound by residues 24–31 (GLDAAGKT), 67–71 (DVGGQ), and 126–129 (NKQD).

Belongs to the small GTPase superfamily. Arf family.

The protein localises to the golgi apparatus. Its function is as follows. GTP-binding protein involved in protein trafficking; may modulate vesicle budding and uncoating within the Golgi apparatus. The chain is ADP-ribosylation factor (ARF1) from Candida albicans (strain SC5314 / ATCC MYA-2876) (Yeast).